We begin with the raw amino-acid sequence, 760 residues long: Polyribonucleotide nucleotidyltransferase (760 aa).

Mg(2+)-binding residues include D492 and D498. Residues P559 to V618 form the KH domain. Residues G628–Q702 form the S1 motif domain. The disordered stretch occupies residues W706–N760. The segment covering E719–N760 has biased composition (basic and acidic residues).

It belongs to the polyribonucleotide nucleotidyltransferase family. Mg(2+) is required as a cofactor.

The protein localises to the cytoplasm. The catalysed reaction is RNA(n+1) + phosphate = RNA(n) + a ribonucleoside 5'-diphosphate. Involved in mRNA degradation. Catalyzes the phosphorolysis of single-stranded polyribonucleotides processively in the 3'- to 5'-direction. This is Polyribonucleotide nucleotidyltransferase from Nitratidesulfovibrio vulgaris (strain ATCC 29579 / DSM 644 / CCUG 34227 / NCIMB 8303 / VKM B-1760 / Hildenborough) (Desulfovibrio vulgaris).